We begin with the raw amino-acid sequence, 296 residues long: Light-independent protochlorophyllide reductase iron-sulfur ATP-binding protein (296 aa).

ATP-binding positions include 10-15 (GIGKST) and Lys39. Ser14 contributes to the Mg(2+) binding site. Cys95 and Cys129 together coordinate [4Fe-4S] cluster. 180-181 (NR) lines the ATP pocket.

Belongs to the NifH/BchL/ChlL family. Homodimer. Protochlorophyllide reductase is composed of three subunits; ChlL, ChlN and ChlB. The cofactor is [4Fe-4S] cluster.

It is found in the plastid. It localises to the chloroplast. The enzyme catalyses chlorophyllide a + oxidized 2[4Fe-4S]-[ferredoxin] + 2 ADP + 2 phosphate = protochlorophyllide a + reduced 2[4Fe-4S]-[ferredoxin] + 2 ATP + 2 H2O. It participates in porphyrin-containing compound metabolism; chlorophyll biosynthesis (light-independent). In terms of biological role, component of the dark-operative protochlorophyllide reductase (DPOR) that uses Mg-ATP and reduced ferredoxin to reduce ring D of protochlorophyllide (Pchlide) to form chlorophyllide a (Chlide). This reaction is light-independent. The L component serves as a unique electron donor to the NB-component of the complex, and binds Mg-ATP. The sequence is that of Light-independent protochlorophyllide reductase iron-sulfur ATP-binding protein from Mesostigma viride (Green alga).